Consider the following 267-residue polypeptide: 4-hydroxy-tetrahydrodipicolinate reductase (267 aa).

10–15 (GCLGKQ) is an NAD(+) binding site. Arg-37 serves as a coordination point for NADP(+). NAD(+)-binding positions include 99-101 (GTT) and 122-125 (TTNV). His-154 functions as the Proton donor/acceptor in the catalytic mechanism. His-155 contacts (S)-2,3,4,5-tetrahydrodipicolinate. Lys-158 acts as the Proton donor in catalysis. A (S)-2,3,4,5-tetrahydrodipicolinate-binding site is contributed by 164 to 165 (GT).

It belongs to the DapB family.

It is found in the cytoplasm. The enzyme catalyses (S)-2,3,4,5-tetrahydrodipicolinate + NAD(+) + H2O = (2S,4S)-4-hydroxy-2,3,4,5-tetrahydrodipicolinate + NADH + H(+). It catalyses the reaction (S)-2,3,4,5-tetrahydrodipicolinate + NADP(+) + H2O = (2S,4S)-4-hydroxy-2,3,4,5-tetrahydrodipicolinate + NADPH + H(+). Its pathway is amino-acid biosynthesis; L-lysine biosynthesis via DAP pathway; (S)-tetrahydrodipicolinate from L-aspartate: step 4/4. Its function is as follows. Catalyzes the conversion of 4-hydroxy-tetrahydrodipicolinate (HTPA) to tetrahydrodipicolinate. This Ehrlichia canis (strain Jake) protein is 4-hydroxy-tetrahydrodipicolinate reductase.